The following is a 337-amino-acid chain: Probable uridine nucleosidase 2 (337 aa).

Residue H260 is part of the active site.

Belongs to the IUNH family.

The protein localises to the cytoplasm. The catalysed reaction is uridine + H2O = D-ribose + uracil. Involved in pyrimidine breakdown. The sequence is that of Probable uridine nucleosidase 2 (URH2) from Oryza sativa subsp. japonica (Rice).